A 237-amino-acid polypeptide reads, in one-letter code: GCN5-related N-acetyltransferase 3, chloroplastic (237 aa).

Residues 1-93 (MGLVGCVGKS…RAISRSDVIV (93 aa)) constitute a chloroplast transit peptide. The 144-residue stretch at 94-237 (SVFCKPQHVD…TMMFTKSLEA (144 aa)) folds into the N-acetyltransferase domain. Acetyl-CoA is bound by residues 171-173 (LMV), 179-184 (RMGIGK), 207-209 (FED), and Phe214.

Belongs to the acetyltransferase family. GNAT subfamily. As to quaternary structure, oligomer. Post-translationally, autoacetylated. Expressed in green tissues.

The protein localises to the plastid. The protein resides in the chloroplast. It carries out the reaction an N-terminal L-alpha-aminoacyl-[protein] + acetyl-CoA = N-terminal N(alpha)-acetyl-L-alpha-aminoacyl-[protein] + CoA + H(+). It catalyses the reaction L-lysyl-[protein] + acetyl-CoA = N(6)-acetyl-L-lysyl-[protein] + CoA + H(+). Its function is as follows. Protein acetyltransferase with dual specificity triggering both N-alpha-acetylation (NTA) and epsilon-lysine acetylation (KA), possibly with a low efficiency or toward specific plastid substrates. This is GCN5-related N-acetyltransferase 3, chloroplastic from Arabidopsis thaliana (Mouse-ear cress).